A 188-amino-acid polypeptide reads, in one-letter code: COMM domain-containing protein 1 (188 aa).

Positions 1–122 (MAAELEGSKA…RWDSGLRGLS (122 aa)) are sufficient for interaction with SLC12A2. The Cu cation site is built by histidine 100, methionine 109, and histidine 133. One can recognise a COMM domain in the interval 117–185 (GLRGLSWRVD…EVEESISTLM (69 aa)). The segment at 124-188 (RVDGKSQSRH…ESISTLMQPA (65 aa)) is required for binding to PtdIns(4,5)P2.

Belongs to the COMM domain-containing protein 1 family. Component of the commander complex consisting of the CCC subcomplex and the retriever subcomplex. Component of the CCC (COMMD/CCDC22/CCDC93) subcomplex consisting of COMMD1, COMMD2, COMMD3, COMMD4, COMMD5, COMMD6, COMMD7, COMMD8, COMMD9, COMMD10, CCDC22 and CCDC93; within the complex forms a heterodimer with COMMD6. Interacts with VPS35L; the interaction associates the CCC complex with the retriever complex. Identified in a complex with an E3 ubiquitin ligase complex composed of TCEB1/elongin C, CUL2, SOCS1 and RBX1; in the complex interacts directly with SOCS1 and CUL2. Identified in a complex with NF-kappa-B. Interacts directly with SLC12A2. Interacts directly with ATP7B (via the N-terminal region). Interacts with ATP7A. Interacts with FAM107A; this interaction stabilizes COMMD1 in the nucleus. Interacts with CCS, CDKN2A, RELA, REL, RELB, NFKB1/p105, NFKB2/p100, NFKBIB, SCNN1D, SCNN1B, CFTR, CLU, SGK1, AKT1, CUL1, CUL2, CUL3, CUL4A, CUL4B, CUL5, CUL7, HIF1A. In terms of processing, ubiquitinated; undergoes both 'Lys-63'- and 'Lys-48'-linked polyubiquitination. Ubiquitinated by XIAP, leading to its proteasomal degradation.

Its subcellular location is the nucleus. The protein localises to the cytoplasm. It localises to the endosome membrane. The protein resides in the cytoplasmic vesicle. It is found in the early endosome. Its subcellular location is the recycling endosome. In terms of biological role, scaffold protein in the commander complex that is essential for endosomal recycling of transmembrane cargos; the commander complex is composed of the CCC subcomplex and the retriever subcomplex. Can modulate activity of cullin-RING E3 ubiquitin ligase (CRL) complexes by displacing CAND1; in vitro promotes CRL E3 activity and dissociates CAND1 from CUL1 and CUL2. Promotes ubiquitination of NF-kappa-B subunit RELA and its subsequent proteasomal degradation. Down-regulates NF-kappa-B activity. Involved in the regulation of membrane expression and ubiquitination of SLC12A2. Modulates Na(+) transport in epithelial cells by regulation of apical cell surface expression of amiloride-sensitive sodium channel (ENaC) subunits and by promoting their ubiquitination presumably involving NEDD4L. Promotes the localization of SCNN1D to recycling endosomes. Promotes CFTR cell surface expression through regulation of its ubiquitination. Down-regulates SOD1 activity by interfering with its homodimerization. Plays a role in copper ion homeostasis. Involved in copper-dependent ATP7A trafficking between the trans-Golgi network and vesicles in the cell periphery; the function is proposed to depend on its association within the CCC complex and cooperation with the WASH complex on early endosomes. Can bind one copper ion per monomer. May function to facilitate biliary copper excretion within hepatocytes. Binds to phosphatidylinositol 4,5-bisphosphate (PtdIns(4,5)P2). Involved in the regulation of HIF1A-mediated transcription; competes with ARNT/Hif-1-beta for binding to HIF1A resulting in decreased DNA binding and impaired transcriptional activation by HIF-1. Negatively regulates neuroblastoma G1/S phase cell cycle progression and cell proliferation by stimulating ubiquitination of NF-kappa-B subunit RELA and NF-kappa-B degradation in a FAM107A- and actin-dependent manner. The protein is COMM domain-containing protein 1 (COMMD1) of Canis lupus familiaris (Dog).